A 502-amino-acid polypeptide reads, in one-letter code: Zinc finger C3HC-type protein 1 (502 aa).

Residue A2 is modified to N-acetylalanine. Phosphoserine is present on S24. T28 carries the post-translational modification Phosphothreonine. Residues 35-74 (LIDEGIAPEEGGVDAQDTSATSQSVNGSPQAEQPSLESTS) form a disordered region. Polar residues predominate over residues 50–72 (QDTSATSQSVNGSPQAEQPSLES). S58 and S62 each carry phosphoserine. T84 is modified (phosphothreonine). A C3HC-type zinc finger spans residues 102-156 (CAKYGWVTVECDMLKCSSCQAFLCASLQPAFDFDRYKQRCAELKKALCTAHEKFC). A disordered region spans residues 302–423 (SSPIPGLEGR…SSRSFFDPTS (122 aa)). S321 and S329 each carry phosphoserine. T333 bears the Phosphothreonine mark. Residues S338, S344, S354, S359, and S370 each carry the phosphoserine modification. Over residues 351-360 (RTRSWDSSSP) the composition is skewed to polar residues. Positions 371–380 (PTTRTRPVTR) are enriched in low complexity. S381 is subject to Phosphoserine. Residue T384 is modified to Phosphothreonine. S395 is modified (phosphoserine). The Nuclear localization signal motif lies at 396–402 (PLRKAKR). Phosphoserine occurs at positions 407 and 483. The segment covering 407–422 (SSSSSDTSSRSFFDPT) has biased composition (low complexity).

Interacts with TPR; this interaction mediates ZC3HC1 nuclear envelopes (NE)-association but also required for proper positioning of a substantial amount of TPR at the nuclear basket (NB). In terms of processing, phosphorylated. May also be weakly phosphorylated on Tyr residues.

It is found in the nucleus. The protein localises to the nucleus envelope. Functionally, required for proper positioning of a substantial amount of TPR at the nuclear basket (NB) through interaction with TPR. The chain is Zinc finger C3HC-type protein 1 (ZC3HC1) from Pongo abelii (Sumatran orangutan).